The chain runs to 614 residues: MKKQWKKIVLFVLPVIITLITLSSFLFYNQDVVHNWSSSRMTYGRFLEYIDMNWVKKVDLYDNARTAIVDIINPDIKGEEQLVRVELPTFSSELVSKLKNKLIDFDAHPSSSNVNLVSWLSNLLLPLILIITLFFFFRRGNKSSSGPGQAFNFGKAKARFHMEAKTGIVFEDVAGIEEAKEELQEIVAFLKDSRKFTNVGATIPKGVLLVGPPGTGKTLLAKAIAGEASAPFFSISGSEFVEMFVGVGASRVRDLFKKAKEKAPCIVFIDEIDAVGRQRGVGIGGGNDEREQTLNQLLTEMDGFSGDTGVIVVAATNRIDVLDSALLRPGRFDRQIMVSLPNINGRLAILKVHSKKKKIHKDVLLEVIARRTPGFSGADLANLLNEAAILTVRRGKVEITMKEIEDSIDKIIAGLEGSPLADSRIKRLIAYHEAGHAVAATFLPHHDPVQKVTLIPRRQAKGLTWFLPNDDQFLVSKSQILSKIIAALAGRAMEEIVFGLPEVTIGAANDIKQVTFMARQMVTKFGMSKVGPICLENSSSEVFIGRDLMGRHELSEEMVAKVDLEVRSILKDCYIQARTILSQNRKLIDRVVNELVEKETIEAKEFMRIVEERV.

Topologically, residues 1–7 (MKKQWKK) are stromal. The helical transmembrane segment at 8-28 (IVLFVLPVIITLITLSSFLFY) threads the bilayer. The Lumenal portion of the chain corresponds to 29–116 (NQDVVHNWSS…AHPSSSNVNL (88 aa)). The helical transmembrane segment at 117 to 137 (VSWLSNLLLPLILIITLFFFF) threads the bilayer. Over 138 to 614 (RRGNKSSSGP…EFMRIVEERV (477 aa)) the chain is Stromal. Residue 211–218 (GPPGTGKT) participates in ATP binding. H432 lines the Zn(2+) pocket. E433 is an active-site residue. Zn(2+) is bound by residues H436 and D510.

This sequence in the central section; belongs to the AAA ATPase family. It in the C-terminal section; belongs to the peptidase M41 family. As to quaternary structure, homohexamer. Requires Zn(2+) as cofactor.

Its subcellular location is the plastid. It is found in the chloroplast thylakoid membrane. Functionally, acts as a processive, ATP-dependent zinc metallopeptidase. In Cyanidium caldarium (Red alga), this protein is ATP-dependent zinc metalloprotease FtsH.